Here is a 390-residue protein sequence, read N- to C-terminus: GTPase Obg (390 aa).

Residues 1–159 form the Obg domain; that stretch reads MKFIDESLIR…RDLLLELMLL (159 aa). The OBG-type G domain maps to 160 to 333; that stretch reads ADVGMLGLPN…LCRDIMDFII (174 aa). GTP-binding positions include 166–173, 191–195, 213–216, 283–286, and 314–316; these read GLPNAGKS, FTTLV, DIPG, NKID, and SAA. 2 residues coordinate Mg(2+): Ser173 and Thr193.

It belongs to the TRAFAC class OBG-HflX-like GTPase superfamily. OBG GTPase family. As to quaternary structure, monomer. Mg(2+) is required as a cofactor.

The protein resides in the cytoplasm. Its function is as follows. An essential GTPase which binds GTP, GDP and possibly (p)ppGpp with moderate affinity, with high nucleotide exchange rates and a fairly low GTP hydrolysis rate. Plays a role in control of the cell cycle, stress response, ribosome biogenesis and in those bacteria that undergo differentiation, in morphogenesis control. The chain is GTPase Obg from Haemophilus influenzae (strain 86-028NP).